Here is a 405-residue protein sequence, read N- to C-terminus: Nodal homolog 2-A (405 aa).

A signal peptide spans 1–18 (MASLGVILFFVIASLIHG). A propeptide spanning residues 19–282 (KPIHSERKAA…RVTDTRRPRR (264 aa)) is cleaved from the precursor. 3 N-linked (GlcNAc...) asparagine glycosylation sites follow: Asn71, Asn172, and Asn343. Cystine bridges form between Cys305–Cys371, Cys334–Cys402, and Cys338–Cys404.

Belongs to the TGF-beta family. Homodimer; disulfide-linked. Forms heterodimers with the TGF-beta family member derriere. Interacts with tsku; enhances nodal2 activity. As to expression, first localized to the vegetal region of the blastula. Just prior to gastrulation (stage 10), this expression disappears and instead becomes localized to the dorsal marginal zone, with enrichment in the organizer.

It is found in the secreted. Functionally, cooperation and regulatory loops of multiple nodals are essential for mesendoderm patterning in early embryos. Essential for mesoderm formation and axial patterning during embryonic development. Activates the activin-like signaling pathway to induce dorsal and ventral mesoderm in animal cap ectoderm. In addition, also dorsalizes ventral marginal zone (VMZ) tissues during gastrulation. Induces muscle actin. Appears to act as both a short-range and long-range morphogen. The unprocessed protein inhibits bmp- and wnt-signaling. This Xenopus laevis (African clawed frog) protein is Nodal homolog 2-A (nodal2-a).